The primary structure comprises 247 residues: Eukaryotic translation initiation factor 6 (247 aa).

Phosphoserine; by CK1 occurs at positions 174 and 175.

This sequence belongs to the eIF-6 family. Monomer. Associates with the 60S ribosomal subunit. Phosphorylation at Ser-174 and Ser-175 promotes nuclear export.

Its subcellular location is the cytoplasm. The protein resides in the nucleus. It is found in the nucleolus. Binds to the 60S ribosomal subunit and prevents its association with the 40S ribosomal subunit to form the 80S initiation complex in the cytoplasm. Is also involved in ribosome biogenesis. Associates with pre-60S subunits in the nucleus and is involved in its nuclear export. The protein is Eukaryotic translation initiation factor 6 (tif6) of Emericella nidulans (strain FGSC A4 / ATCC 38163 / CBS 112.46 / NRRL 194 / M139) (Aspergillus nidulans).